The sequence spans 108 residues: Tubulin-specific chaperone A (108 aa).

Ala-2 is modified (N-acetylalanine).

Belongs to the TBCA family. In terms of assembly, supercomplex made of cofactors A to E. Cofactors A and D function by capturing and stabilizing tubulin in a quasi-native conformation. Cofactor E binds to the cofactor D-tubulin complex; interaction with cofactor C then causes the release of tubulin polypeptides that are committed to the native state. As to expression, widely expressed, but is most abundant in the testis.

The protein localises to the cytoplasm. It is found in the cytoskeleton. Functionally, tubulin-folding protein; involved in the early step of the tubulin folding pathway. The polypeptide is Tubulin-specific chaperone A (TBCA) (Bos taurus (Bovine)).